Here is a 228-residue protein sequence, read N- to C-terminus: Probable endonuclease LCL3 (228 aa).

A helical membrane pass occupies residues 13–30; that stretch reads LLVSAGFTTSLFVGFNLY. The TNase-like domain maps to 52-210; sequence RQLYGKVTRV…KLLRRGVWSL (159 aa). The active site involves R101. Position 106 (D106) interacts with Ca(2+). Residues E109 and R149 contribute to the active site.

Belongs to the LCL3 family.

The protein localises to the mitochondrion. The protein resides in the membrane. The protein is Probable endonuclease LCL3 (LCL3) of Meyerozyma guilliermondii (strain ATCC 6260 / CBS 566 / DSM 6381 / JCM 1539 / NBRC 10279 / NRRL Y-324) (Yeast).